We begin with the raw amino-acid sequence, 247 residues long: Uridylate kinase (247 aa).

18 to 21 (KLSG) is a binding site for ATP. Position 60 (glycine 60) interacts with UMP. ATP-binding residues include glycine 61 and arginine 65. UMP is bound by residues aspartate 80 and 141 to 148 (TGNPFFTT). Positions 168, 174, and 177 each coordinate ATP.

It belongs to the UMP kinase family. Homohexamer.

It is found in the cytoplasm. It carries out the reaction UMP + ATP = UDP + ADP. Its pathway is pyrimidine metabolism; CTP biosynthesis via de novo pathway; UDP from UMP (UMPK route): step 1/1. Its activity is regulated as follows. Inhibited by UTP. Functionally, catalyzes the reversible phosphorylation of UMP to UDP. This is Uridylate kinase from Ectopseudomonas mendocina (strain ymp) (Pseudomonas mendocina).